A 664-amino-acid polypeptide reads, in one-letter code: Protein LYK5 (664 aa).

The signal sequence occupies residues 1-26 (MAACTLHALSVTLFLLLFFAVSPAKA). Residues 27–277 (QQPYVNNHQL…DPPGSSSSHK (251 aa)) are Extracellular-facing. 5 N-linked (GlcNAc...) asparagine glycosylation sites follow: asparagine 45, asparagine 81, asparagine 111, asparagine 125, and asparagine 129. Cystine bridges form between cysteine 52–cysteine 114, cysteine 58–cysteine 181, and cysteine 112–cysteine 179. Position 135–141 (135–141 (GDETYFS)) interacts with chitin. N-linked (GlcNAc...) asparagine glycosylation is present at asparagine 144. Residue 164–170 (ERQLTPG) coordinates chitin. Positions 195–238 (LTYLVAMGDSISGIAEMFNSTSAAITEGNELTSDNIFFFTPVLV) constitute a LysM domain. Asparagine 213 carries an N-linked (GlcNAc...) asparagine glycan. Over residues 251 to 269 (PSPPPPPVVATPPQTPVDP) the composition is skewed to pro residues. The interval 251–270 (PSPPPPPVVATPPQTPVDPP) is disordered. Residues 278 to 298 (WIYIGIGIGAGLLLLLSILAL) form a helical membrane-spanning segment. At 299-664 (CFYKRRSKKK…DLLRSGSLGN (366 aa)) the chain is on the cytoplasmic side. Positions 351–643 (KSAIESLTLY…TQVLTTLSMI (293 aa)) constitute a Protein kinase domain. Residues 357-365 (LTLYRFNDL) and lysine 395 each bind ATP.

This sequence belongs to the protein kinase superfamily. Ser/Thr protein kinase family.

The protein localises to the cell membrane. Functionally, may recognize microbe-derived N-acetylglucosamine (NAG)-containing ligands. In Arabidopsis thaliana (Mouse-ear cress), this protein is Protein LYK5 (LYK5).